A 105-amino-acid polypeptide reads, in one-letter code: MICOS complex subunit Mic10 (105 aa).

Residues 29–46 (LLKVTGGVAIGIVASVAF) form a helical membrane-spanning segment. Residues 47-105 (FKSRSWPIWFGSGVGLGTGWSNCRHDFASPYVLHGKRVPAGQDSQGKPAYNIITEQHKQ) are Mitochondrial intermembrane-facing. The tract at residues 85–105 (PAGQDSQGKPAYNIITEQHKQ) is disordered.

It belongs to the MICOS complex subunit Mic10 family. In terms of assembly, component of the mitochondrial contact site and cristae organizing system (MICOS) complex.

It is found in the mitochondrion inner membrane. In terms of biological role, component of the MICOS complex, a large protein complex of the mitochondrial inner membrane that plays crucial roles in the maintenance of crista junctions, inner membrane architecture, and formation of contact sites to the outer membrane. The protein is MICOS complex subunit Mic10 of Caenorhabditis elegans.